The chain runs to 473 residues: MAVKTYNAGVKDYRNTYWEPDYSVKDTDILAVFKITPQAGVDREEAAAAVAAESSTGTWTTVWTDLLTDLDYYKGRAYRIEDVPGDDTCFYAFIAYPIDLFEEGSVVNVFTSLVGNVFGFKAVRALRLEDVRFPIAYVKTCGGPPHGIQVERDIMNKYGRPLLGCTIKPKLGLSAKNYGRACYEGLRGGLDFTKDDENVNSQPFMRWRQRFDFVMEAIQKAEAETGERKGHYLNVTAPTPEEMYKRAEYAKEIGAPIIMHDYITGGFCANTGLANWCRDNGMLLHIHRAMHAVLDRNPHHGIHFRVLTKILRLSGGDHLHSGTVVGKLEGDREATLGWIDIMRDRFIKEDRSRGIFFDQDWGSMPGVMPVASGGIHVWHMPALVTIFGDDSVLQFGGGTLGHPWGNAAGAAANRVALEACVEARNRGVAIEKEGKAVLTEAAKHSPELKIAMETWKEIKFEFDTVDKLDVAHK.

Residues Asn-116 and Thr-166 each coordinate substrate. Lys-168 (proton acceptor) is an active-site residue. Substrate is bound at residue Lys-170. Mg(2+)-binding residues include Lys-194, Asp-196, and Glu-197. N6-carboxylysine is present on Lys-194. His-287 functions as the Proton acceptor in the catalytic mechanism. Arg-288, His-320, and Ser-372 together coordinate substrate.

It belongs to the RuBisCO large chain family. Type I subfamily. Heterohexadecamer of 8 large chains and 8 small chains. Mg(2+) is required as a cofactor.

It carries out the reaction 2 (2R)-3-phosphoglycerate + 2 H(+) = D-ribulose 1,5-bisphosphate + CO2 + H2O. It catalyses the reaction D-ribulose 1,5-bisphosphate + O2 = 2-phosphoglycolate + (2R)-3-phosphoglycerate + 2 H(+). In terms of biological role, ruBisCO catalyzes two reactions: the carboxylation of D-ribulose 1,5-bisphosphate, the primary event in carbon dioxide fixation, as well as the oxidative fragmentation of the pentose substrate. Both reactions occur simultaneously and in competition at the same active site. The polypeptide is Ribulose bisphosphate carboxylase large chain 2 (Acidithiobacillus ferrooxidans (strain ATCC 23270 / DSM 14882 / CIP 104768 / NCIMB 8455) (Ferrobacillus ferrooxidans (strain ATCC 23270))).